The chain runs to 910 residues: MDTAEEDICRVCRSEGTPEKPLYHPCVCTGSIKFIHQECLVQWLKHSRKEYCELCKHRFAFTPIYSPDMPSRLPIQDIFAGLVTSIGTAIRYWFHYTLVAFAWLGVVPLTACRIYKCLFTGSVSSLLTLPLDMLSTENLLADCLQGCFVVTCTLCAFISLVWLREQIVHGGAPIWLEHAAPPFNAAGHHQNEAPAGGNGAENVAADQPANPPAENAVVGENPDAQDDQAEEEEEDNEEEDDAGVEDAADANNGAQDDMNWNALEWDRAAEELTWERMLGLDGSLVFLEHVFWVVSLNTLFILVFAFCPYHIGHFSLVGLGFEEHVQASHFEGLITTIVGYILLAITLIICHGLATLVKFHRSRRLLGVCYIVVKVSLLVVVEIGVFPLICGWWLDICSLEMFDATLKDRELSFQSAPGTTMFLHWLVGMVYVFYFASFILLLREVLRPGVLWFLRNLNDPDFNPVQEMIHLPIYRHLRRFILSVIVFGSIVLLMLWLPIRIIKSVLPNFLPYNVMLYSDAPVSELSLELLLLQVVLPALLEQRTHEAVAEGLVRAWTVTAGYLLDLHSYLLGDQEENENSANQQVNNNQHARNNNAIPVVGEGLHAAHQAILQQGGPVGFQPYRRPLNFPLRIFLLIVFMCITLLIASLICLTLPVFAGRWLMSFWTGTAKIHELYTAACGLYVCWLTIRAVTVMVAWMPQGRRVVFQKVKEWSLMIMKTLIVAVLLAGVVPLLLGLLFELVIVAPLRVPLDQTPLFYPWQDWALGVLHAKIIAAITLMGPQWWLKTVIEQVYANGIRNIDLHYIVRKLAAPVISVLLLSLCVPYVIASGVVPLLGVTAEMQNLVHRRIYPFLLMVVVLMAILSFQVRQFKRLYEHIKNDKYLVGQRLVNYERKSGKQGSSPPPPQSSQE.

Position 1 is an N-acetylmethionine (M1). The RING-CH-type zinc finger occupies 1–62; the sequence is MDTAEEDICR…ELCKHRFAFT (62 aa). At 1-91 the chain is on the cytoplasmic side; the sequence is MDTAEEDICR…LVTSIGTAIR (91 aa). Residues C9, C12, C26, C28, H36, C39, C52, and C55 each contribute to the Zn(2+) site. A helical membrane pass occupies residues 92–112; it reads YWFHYTLVAFAWLGVVPLTAC. At 113 to 142 the chain is on the extracellular side; that stretch reads RIYKCLFTGSVSSLLTLPLDMLSTENLLAD. The chain crosses the membrane as a helical span at residues 143-163; it reads CLQGCFVVTCTLCAFISLVWL. Residues 164 to 283 are Cytoplasmic-facing; sequence REQIVHGGAP…WERMLGLDGS (120 aa). Residues 185 to 256 are disordered; sequence AAGHHQNEAP…AADANNGAQD (72 aa). Residues 223–248 show a composition bias toward acidic residues; it reads DAQDDQAEEEEEDNEEEDDAGVEDAA. The helical transmembrane segment at 284–304 threads the bilayer; sequence LVFLEHVFWVVSLNTLFILVF. Over 305 to 336 the chain is Extracellular; the sequence is AFCPYHIGHFSLVGLGFEEHVQASHFEGLITT. The chain crosses the membrane as a helical span at residues 337 to 357; that stretch reads IVGYILLAITLIICHGLATLV. Residues 358-376 lie on the Cytoplasmic side of the membrane; that stretch reads KFHRSRRLLGVCYIVVKVS. Residues 377–397 traverse the membrane as a helical segment; it reads LLVVVEIGVFPLICGWWLDIC. The Extracellular portion of the chain corresponds to 398–421; sequence SLEMFDATLKDRELSFQSAPGTTM. A helical membrane pass occupies residues 422–442; the sequence is FLHWLVGMVYVFYFASFILLL. Residues 443 to 480 lie on the Cytoplasmic side of the membrane; that stretch reads REVLRPGVLWFLRNLNDPDFNPVQEMIHLPIYRHLRRF. The helical transmembrane segment at 481 to 501 threads the bilayer; it reads ILSVIVFGSIVLLMLWLPIRI. Topologically, residues 502 to 519 are extracellular; the sequence is IKSVLPNFLPYNVMLYSD. The chain crosses the membrane as a helical span at residues 520–540; it reads APVSELSLELLLLQVVLPALL. At 541-632 the chain is on the cytoplasmic side; that stretch reads EQRTHEAVAE…YRRPLNFPLR (92 aa). A helical membrane pass occupies residues 633-653; it reads IFLLIVFMCITLLIASLICLT. Residues 654 to 678 are Extracellular-facing; sequence LPVFAGRWLMSFWTGTAKIHELYTA. A helical membrane pass occupies residues 679 to 699; that stretch reads ACGLYVCWLTIRAVTVMVAWM. Residues 700–721 are Cytoplasmic-facing; it reads PQGRRVVFQKVKEWSLMIMKTL. Residues 722–742 form a helical membrane-spanning segment; the sequence is IVAVLLAGVVPLLLGLLFELV. The Extracellular portion of the chain corresponds to 743–764; sequence IVAPLRVPLDQTPLFYPWQDWA. The helical transmembrane segment at 765–785 threads the bilayer; sequence LGVLHAKIIAAITLMGPQWWL. Over 786-815 the chain is Cytoplasmic; it reads KTVIEQVYANGIRNIDLHYIVRKLAAPVIS. A helical transmembrane segment spans residues 816-836; that stretch reads VLLLSLCVPYVIASGVVPLLG. Over 837–848 the chain is Extracellular; that stretch reads VTAEMQNLVHRR. Residues 849-869 form a helical membrane-spanning segment; it reads IYPFLLMVVVLMAILSFQVRQ. Topologically, residues 870–910 are cytoplasmic; that stretch reads FKRLYEHIKNDKYLVGQRLVNYERKSGKQGSSPPPPQSSQE.

This sequence belongs to the DOA10/MARCHF6 family. In terms of assembly, interacts with DIO2. Interacts with SQLE. In terms of processing, auto-ubiquitinated, which results in proteasomal degradation. Deubiquitinated by USP19; protecting MARCHF6 from p97-mediated proteasomal degradation.

It localises to the endoplasmic reticulum membrane. The catalysed reaction is S-ubiquitinyl-[E2 ubiquitin-conjugating enzyme]-L-cysteine + [acceptor protein]-L-lysine = [E2 ubiquitin-conjugating enzyme]-L-cysteine + N(6)-ubiquitinyl-[acceptor protein]-L-lysine.. It participates in protein modification; protein ubiquitination. In terms of biological role, endoplasmic reticulum membrane-associated E3 ubiquitin ligase that plays a critical role in mitigating endoplasmic reticulum stress, the regulation of cholesterol and lipid homeostasis, and ferroptosis. Acts as a pivotal component of both the Ac/N-degron pathway (targeting the N-terminal acetyl group of substrates) and the ER-associated protein degradation-cytosol (ERAD-C) pathway (targeting misfolded substrates). For instance, mediates the degradation of Ac/N-degron-bearing proteins such as the G-protein regulator RGS2 and the lipid droplet protein PLIN2. Suppresses endoplasmic reticulum stress and ferroptosis through cytosolic POMC degradation. Prevents ferroptosis by acting as a NADPH sensor during lipid peroxidation through its C-terminal regulatory region. Facilitates also the degradation of selected endoplasmic reticulum proteins by associating with signal peptide peptidase for the turnover of endogenous tail-anchored proteins. Promotes ubiquitination of DIO2, leading to its degradation. By ubiquitinating and thereby modulating the stability of many proteins of the cholesterol pathway including SQLE, CYP51A1, CYP11A1 and HMGCR, acts as a crucial post-translational regulator of cholesterol synthesis. The sequence is that of E3 ubiquitin-protein ligase MARCHF6 (MARCHF6) from Pongo abelii (Sumatran orangutan).